A 337-amino-acid chain; its full sequence is Adenylosuccinate synthetase (337 aa).

Residues 12–18 (GDEGKGK) and 42–44 (GHT) each bind GTP. The Proton acceptor role is filled by Asp-13. Positions 13 and 42 each coordinate Mg(2+). IMP-binding positions include 13–16 (DEGK), 40–43 (NAGH), Thr-127, Arg-141, Gln-179, Thr-194, and Arg-256. Residue His-43 is the Proton donor of the active site. 252 to 258 (TVTGRRR) is a substrate binding site. Residues Arg-258, 284–286 (CLD), and 324–326 (STG) contribute to the GTP site.

It belongs to the adenylosuccinate synthetase family. In terms of assembly, homodimer. It depends on Mg(2+) as a cofactor.

It localises to the cytoplasm. The enzyme catalyses IMP + L-aspartate + GTP = N(6)-(1,2-dicarboxyethyl)-AMP + GDP + phosphate + 2 H(+). It functions in the pathway purine metabolism; AMP biosynthesis via de novo pathway; AMP from IMP: step 1/2. In terms of biological role, plays an important role in the de novo pathway of purine nucleotide biosynthesis. Catalyzes the first committed step in the biosynthesis of AMP from IMP. This chain is Adenylosuccinate synthetase, found in Methanococcus maripaludis (strain C6 / ATCC BAA-1332).